Reading from the N-terminus, the 591-residue chain is Isocitrate dehydrogenase kinase/phosphatase (591 aa).

ATP is bound by residues 315–321 and lysine 336; that span reads APGVKGM. The active site involves aspartate 371.

Belongs to the AceK family.

The protein resides in the cytoplasm. It catalyses the reaction L-seryl-[isocitrate dehydrogenase] + ATP = O-phospho-L-seryl-[isocitrate dehydrogenase] + ADP + H(+). Bifunctional enzyme which can phosphorylate or dephosphorylate isocitrate dehydrogenase (IDH) on a specific serine residue. This is a regulatory mechanism which enables bacteria to bypass the Krebs cycle via the glyoxylate shunt in response to the source of carbon. When bacteria are grown on glucose, IDH is fully active and unphosphorylated, but when grown on acetate or ethanol, the activity of IDH declines drastically concomitant with its phosphorylation. The sequence is that of Isocitrate dehydrogenase kinase/phosphatase from Pectobacterium carotovorum subsp. carotovorum (strain PC1).